Here is a 476-residue protein sequence, read N- to C-terminus: PRAME family member 6 (476 aa).

The LRR 1; degenerate repeat unit spans residues 97–124; it reads RWKLQVLDLQDVCENFWMVWSEAMARGC. An LRR 2; degenerate repeat occupies 179–203; sequence HLCCKKLKILGMPFRNIRSILKMVN. The stretch at 204–230 is one LRR 3; degenerate repeat; sequence LDCIQEVEVNCKWVLPILTQFTPYLGH. An LRR 4; degenerate repeat occupies 231 to 266; that stretch reads MRNLQKLVLSHMDVSRYVSPEQKKEIVTQFTTQFLK. LRR repeat units lie at residues 267-292, 293-324, 325-345, 349-376, and 377-401; these read LCCL…LSCL, KTSL…SQLK, TLDL…QILL, AATL…ALSR, and CFEL…LLSH.

It belongs to the PRAME family. In terms of assembly, component of a CRL2 E3 ubiquitin-protein ligase complex, also named ECS (Elongin BC-CUL2/5-SOCS-box protein) complex, composed of CUL2, Elongin BC (ELOB and ELOC), RBX1 and substrate-specific adapter PRAMEF6.

It participates in protein modification; protein ubiquitination. Its function is as follows. Substrate-recognition component of a Cul2-RING (CRL2) E3 ubiquitin-protein ligase complex, which mediates ubiquitination of target proteins, leading to their degradation. The CRL2(PRAMEF6) complex mediates ubiquitination and degradation of truncated MSRB1/SEPX1 selenoproteins produced by failed UGA/Sec decoding. The protein is PRAME family member 6 of Homo sapiens (Human).